The chain runs to 531 residues: Peptide chain release factor 3 (531 aa).

Residues 13–282 (SKRRTFAIIS…GLTQWAPSPM (270 aa)) form the tr-type G domain. Residues 22-29 (SHPDAGKT), 90-94 (DTPGH), and 144-147 (NKLD) each bind GTP.

It belongs to the TRAFAC class translation factor GTPase superfamily. Classic translation factor GTPase family. PrfC subfamily.

The protein resides in the cytoplasm. Functionally, increases the formation of ribosomal termination complexes and stimulates activities of RF-1 and RF-2. It binds guanine nucleotides and has strong preference for UGA stop codons. It may interact directly with the ribosome. The stimulation of RF-1 and RF-2 is significantly reduced by GTP and GDP, but not by GMP. This Vibrio cholerae serotype O1 (strain ATCC 39315 / El Tor Inaba N16961) protein is Peptide chain release factor 3.